The following is a 354-amino-acid chain: Peptide chain release factor 1 (354 aa).

Glutamine 231 carries the post-translational modification N5-methylglutamine.

Belongs to the prokaryotic/mitochondrial release factor family. Methylated by PrmC. Methylation increases the termination efficiency of RF1.

The protein resides in the cytoplasm. Peptide chain release factor 1 directs the termination of translation in response to the peptide chain termination codons UAG and UAA. This is Peptide chain release factor 1 from Acholeplasma laidlawii (strain PG-8A).